The following is a 404-amino-acid chain: Propionate kinase (404 aa).

This sequence belongs to the acetokinase family. PduW subfamily.

The protein resides in the cytoplasm. It carries out the reaction propanoate + ATP = propanoyl phosphate + ADP. Its pathway is polyol metabolism; 1,2-propanediol degradation. Functionally, works with phosphate acetyltransferase (pta) to capture exogenous propionate and regenerate propionyl-CoA during degradation of 1,2-propanediol (1,2-PD). Its function is as follows. Expression of a cosmid containing the full 21-gene pdu operon in E.coli allows E.coli to grow on 1,2-propanediol (1,2-PD) with the appearance of bacterial microcompartments (BMC) in its cytoplasm. This is Propionate kinase from Citrobacter freundii.